A 207-amino-acid chain; its full sequence is C-type lectin domain family 2 member D11 (207 aa).

The Cytoplasmic portion of the chain corresponds to M1–C44. A phosphoserine mark is found at S7 and S16. A helical; Signal-anchor for type II membrane protein transmembrane segment spans residues C45–V65. At K66–M207 the chain is on the extracellular side. In terms of domain architecture, C-type lectin spans V87–L198. N100 carries N-linked (GlcNAc...) asparagine glycosylation.

The protein localises to the cell membrane. In terms of biological role, receptor for KLRB1B that protects target cells against natural killer cell-mediated lysis. The chain is C-type lectin domain family 2 member D11 (Clec2d11) from Rattus norvegicus (Rat).